The chain runs to 434 residues: Probable tRNA pseudouridine synthase D (434 aa).

The active-site Nucleophile is the Asp93. The 228-residue stretch at 169-396 (GTPNYFGQQR…SAGSRRAILL (228 aa)) folds into the TRUD domain.

It belongs to the pseudouridine synthase TruD family.

The catalysed reaction is uridine(13) in tRNA = pseudouridine(13) in tRNA. In terms of biological role, could be responsible for synthesis of pseudouridine from uracil-13 in transfer RNAs. The polypeptide is Probable tRNA pseudouridine synthase D (Halobacterium salinarum (strain ATCC 29341 / DSM 671 / R1)).